Reading from the N-terminus, the 295-residue chain is bZIP transcription factor 60 (295 aa).

The tract at residues 101-154 is disordered; it reads PAAADDSGKENSDLVVEKKSNDSGSEIHDDDDEEGDDDAVAKKRRRRVRNRDAA. Basic and acidic residues predominate over residues 106–127; the sequence is DSGKENSDLVVEKKSNDSGSEI. Residues 128 to 138 are compositionally biased toward acidic residues; that stretch reads HDDDDEEGDDD. The bZIP domain occupies 140 to 203; sequence VAKKRRRRVR…QSLRYCLQKG (64 aa). The basic motif stretch occupies residues 142–162; that stretch reads KKRRRRVRNRDAAVRSRERKK. A leucine-zipper region spans residues 168–182; it reads LEKKSKYLERECLRL. The chain crosses the membrane as a helical span at residues 224-244; sequence LLLGSLLWLLGVNFICLFPYM.

This sequence belongs to the bZIP family. In terms of assembly, interacts with BZIP28. Expressed in seedlings, rosette and cauline leaves, stems, buds, flowers, siliques, immature seeds, anthers and pollen grains.

Its subcellular location is the endoplasmic reticulum membrane. It localises to the nucleus. Its function is as follows. Transcription factor involved in the unfolded protein response (UPR). Acts during endoplasmic reticulum stress (ER) by activating unfolded protein response (UPR) target genes via direct binding to the UPR element (UPRE). Plays a role in plant immunity and abiotic stress responses. The protein is bZIP transcription factor 60 of Arabidopsis thaliana (Mouse-ear cress).